Consider the following 425-residue polypeptide: Glutamate-1-semialdehyde 2,1-aminomutase (425 aa).

Lys265 bears the N6-(pyridoxal phosphate)lysine mark.

This sequence belongs to the class-III pyridoxal-phosphate-dependent aminotransferase family. HemL subfamily. In terms of assembly, homodimer. Pyridoxal 5'-phosphate serves as cofactor.

It localises to the cytoplasm. The enzyme catalyses (S)-4-amino-5-oxopentanoate = 5-aminolevulinate. It functions in the pathway porphyrin-containing compound metabolism; protoporphyrin-IX biosynthesis; 5-aminolevulinate from L-glutamyl-tRNA(Glu): step 2/2. This is Glutamate-1-semialdehyde 2,1-aminomutase from Laribacter hongkongensis (strain HLHK9).